The chain runs to 410 residues: Ribose 1,5-bisphosphate phosphokinase PhnN (410 aa).

The unknown stretch occupies residues 1–220 (MRYAVYLAPP…VWLLMAGSTS (220 aa)). Positions 221–410 (MRTETGQLIY…SHCHQPITAL (190 aa)) are ribose 1,5-bisphosphokinase. Position 233-240 (233-240 (GPSGAGKD)) interacts with ATP.

In the C-terminal section; belongs to the ribose 1,5-bisphosphokinase family.

It carries out the reaction alpha-D-ribose 1,5-bisphosphate + ATP = 5-phospho-alpha-D-ribose 1-diphosphate + ADP. It functions in the pathway metabolic intermediate biosynthesis; 5-phospho-alpha-D-ribose 1-diphosphate biosynthesis; 5-phospho-alpha-D-ribose 1-diphosphate from D-ribose 5-phosphate (route II): step 3/3. Functionally, catalyzes the phosphorylation of ribose 1,5-bisphosphate to 5-phospho-D-ribosyl alpha-1-diphosphate (PRPP). This chain is Ribose 1,5-bisphosphate phosphokinase PhnN (phnN), found in Laribacter hongkongensis (strain HLHK9).